A 593-amino-acid chain; its full sequence is Progranulin (593 aa).

An N-terminal signal peptide occupies residues 1–17 (MWTLVSWVALTAGLVAG). Asparagine 118 carries an N-linked (GlcNAc...) asparagine glycan. Cystine bridges form between cysteine 126-cysteine 139 and cysteine 133-cysteine 149. Asparagine 236 and asparagine 265 each carry an N-linked (GlcNAc...) asparagine glycan. Intrachain disulfides connect cysteine 284/cysteine 296, cysteine 290/cysteine 306, cysteine 297/cysteine 314, cysteine 307/cysteine 321, cysteine 315/cysteine 328, cysteine 322/cysteine 335, cysteine 366/cysteine 378, cysteine 372/cysteine 388, cysteine 397/cysteine 410, and cysteine 404/cysteine 416. Residue asparagine 368 is glycosylated (N-linked (GlcNAc...) asparagine). Asparagine 530 is a glycosylation site (N-linked (GlcNAc...) asparagine).

Belongs to the granulin family. In terms of assembly, progranulin is secreted as a homodimer. Interacts with SLPI; interaction protects progranulin from proteolysis. Interacts (via region corresponding to granulin-7 peptide) with CTSD; stabilizes CTSD and increases its proteolytic activity. Interacts (via region corresponding to granulin-7 peptide) with SORT1; this interaction mediates endocytosis and lysosome delivery of progranulin; interaction occurs at the neuronal cell surface in a stressed nervous system. Interacts with PSAP; facilitates lysosomal delivery of progranulin from the extracellular space and the biosynthetic pathway. Forms a complex with PSAP and M6PR; PSAP bridges the binding between progranulin and M6PR. Forms a complex with PSAP and SORT1; progranulin bridges the interaction between PSAP and SORT1; facilitates lysosomal targeting of PSAP via SORT1; interaction enhances PSAP uptake in primary cortical neurons. Interacts (via regions corresponding to granulin-2 and granulin-7 peptides) with GBA1; this interaction prevents aggregation of GBA1-SCARB2 complex via interaction with HSPA1A upon stress. Interacts (via region corresponding to granulin-7 peptide) with HSPA1A; mediates recruitment of HSPA1A to GBA1 and prevents GBA1 aggregation in response to stress. In terms of processing, cleaved by ELANE; proteolysis is blocked by SLPI and is concentration- and time-dependent and induces CXCL8/IL-8 production; granulin-3 and granulin-4 are resistant to ELANE. Cleaved by CTSL in lysosome thus regulating the maturation and turnover of progranulin within the lysosome. In myelogenous leukemic cell lines of promonocytic, promyelocytic, and proerythroid lineage, in fibroblasts, and very strongly in epithelial cell lines. Present in inflammatory cells and bone marrow. Highest levels in kidney.

It localises to the secreted. The protein resides in the lysosome. Functionally, secreted protein that acts as a key regulator of lysosomal function and as a growth factor involved in inflammation, wound healing and cell proliferation. Regulates protein trafficking to lysosomes, and also the activity of lysosomal enzymes. Also facilitates the acidification of lysosomes, causing degradation of mature CTSD by CTSB. In addition, functions as a wound-related growth factor that acts directly on dermal fibroblasts and endothelial cells to promote division, migration and the formation of capillary-like tubule structures. Also promotes epithelial cell proliferation by blocking TNF-mediated neutrophil activation preventing release of oxidants and proteases. Moreover, modulates inflammation in neurons by preserving neurons survival, axonal outgrowth and neuronal integrity. In terms of biological role, promotes proliferation of the epithelial cell line A431 in culture. Its function is as follows. Inhibits epithelial cell proliferation and induces epithelial cells to secrete IL-8. Stabilizes CTSD through interaction with CTSD leading to maintain its aspartic-type peptidase activity. This is Progranulin from Homo sapiens (Human).